Consider the following 200-residue polypeptide: GTP cyclohydrolase 1 (200 aa).

Zn(2+)-binding residues include Cys-87, His-90, and Cys-158.

Belongs to the GTP cyclohydrolase I family. Toroid-shaped homodecamer, composed of two pentamers of five dimers.

The catalysed reaction is GTP + H2O = 7,8-dihydroneopterin 3'-triphosphate + formate + H(+). It functions in the pathway cofactor biosynthesis; 7,8-dihydroneopterin triphosphate biosynthesis; 7,8-dihydroneopterin triphosphate from GTP: step 1/1. This is GTP cyclohydrolase 1 from Xanthomonas euvesicatoria pv. vesicatoria (strain 85-10) (Xanthomonas campestris pv. vesicatoria).